Here is a 249-residue protein sequence, read N- to C-terminus: Solute carrier family 25 member 35 (249 aa).

2 Solcar repeats span residues 1 to 90 (MDFL…AEAG) and 152 to 243 (QSWK…LRMV). 4 consecutive transmembrane segments (helical) span residues 38–58 (TYQR…KVDG), 59–79 (LAAL…MNGI), 154–174 (WKVA…AMTP), and 226–249 (LGPH…TYTK).

It belongs to the mitochondrial carrier (TC 2.A.29) family.

It localises to the mitochondrion inner membrane. It carries out the reaction a dicarboxylate(in) + sulfate(out) = a dicarboxylate(out) + sulfate(in). Putative antiporter that exchanges dicarboxylates and sulfur oxoanions across the inner membrane of mitochondria. The protein is Solute carrier family 25 member 35 (SLC25A35) of Bos taurus (Bovine).